A 385-amino-acid chain; its full sequence is Chorismate synthase (385 aa).

NADP(+) is bound by residues Arg-40 and Arg-46. FMN-binding positions include 128 to 130, 248 to 249, Gly-293, 308 to 312, and Arg-334; these read RAS, QA, and KAIPS.

This sequence belongs to the chorismate synthase family. In terms of assembly, homotetramer. FMNH2 is required as a cofactor.

The enzyme catalyses 5-O-(1-carboxyvinyl)-3-phosphoshikimate = chorismate + phosphate. The protein operates within metabolic intermediate biosynthesis; chorismate biosynthesis; chorismate from D-erythrose 4-phosphate and phosphoenolpyruvate: step 7/7. Its function is as follows. Catalyzes the anti-1,4-elimination of the C-3 phosphate and the C-6 proR hydrogen from 5-enolpyruvylshikimate-3-phosphate (EPSP) to yield chorismate, which is the branch point compound that serves as the starting substrate for the three terminal pathways of aromatic amino acid biosynthesis. This reaction introduces a second double bond into the aromatic ring system. The sequence is that of Chorismate synthase from Endomicrobium trichonymphae.